We begin with the raw amino-acid sequence, 443 residues long: Xaa-Pro dipeptidase (443 aa).

Positions 246, 257, 339, 384, and 423 each coordinate Mn(2+).

This sequence belongs to the peptidase M24B family. Bacterial-type prolidase subfamily. Mn(2+) serves as cofactor.

The enzyme catalyses Xaa-L-Pro dipeptide + H2O = an L-alpha-amino acid + L-proline. In terms of biological role, splits dipeptides with a prolyl residue in the C-terminal position. In Yersinia pestis bv. Antiqua (strain Nepal516), this protein is Xaa-Pro dipeptidase.